The primary structure comprises 288 residues: Purine nucleoside phosphorylase (288 aa).

65–66 (RN) contacts phosphate. M201 contributes to the substrate binding site. T202 contacts phosphate.

This sequence belongs to the PNP/MTAP phosphorylase family. MTAP subfamily. Homotrimer.

The protein resides in the cytoplasm. The protein localises to the nucleus. It carries out the reaction a purine D-ribonucleoside + phosphate = a purine nucleobase + alpha-D-ribose 1-phosphate. It functions in the pathway purine metabolism; purine nucleoside salvage. Its function is as follows. Purine nucleoside phosphorylase involved in purine salvage. This Drosophila pseudoobscura pseudoobscura (Fruit fly) protein is Purine nucleoside phosphorylase.